Consider the following 382-residue polypeptide: Galactokinase (382 aa).

34–37 (EHTD) is a substrate binding site. An ATP-binding site is contributed by 124–130 (GAGLSSS). Positions 130 and 162 each coordinate Mg(2+). Aspartate 174 (proton acceptor) is an active-site residue. Tyrosine 223 is a substrate binding site.

The protein belongs to the GHMP kinase family. GalK subfamily.

It is found in the cytoplasm. It catalyses the reaction alpha-D-galactose + ATP = alpha-D-galactose 1-phosphate + ADP + H(+). It participates in carbohydrate metabolism; galactose metabolism. In terms of biological role, catalyzes the transfer of the gamma-phosphate of ATP to D-galactose to form alpha-D-galactose-1-phosphate (Gal-1-P). In Escherichia coli O127:H6 (strain E2348/69 / EPEC), this protein is Galactokinase.